The sequence spans 226 residues: Urease accessory protein UreF (226 aa).

It belongs to the UreF family. In terms of assembly, ureD, UreF and UreG form a complex that acts as a GTP-hydrolysis-dependent molecular chaperone, activating the urease apoprotein by helping to assemble the nickel containing metallocenter of UreC. The UreE protein probably delivers the nickel.

It localises to the cytoplasm. Its function is as follows. Required for maturation of urease via the functional incorporation of the urease nickel metallocenter. The polypeptide is Urease accessory protein UreF (Burkholderia lata (strain ATCC 17760 / DSM 23089 / LMG 22485 / NCIMB 9086 / R18194 / 383)).